The chain runs to 355 residues: Galectin-9 (355 aa).

Galectin domains follow at residues 17-148 (FTGM…ISFQ) and 227-355 (FFTS…HVQT). A beta-D-galactoside contacts are provided by residues asparagine 48, histidine 61, arginine 65, asparagine 75, 82–88 (WGTEERK), histidine 267, arginine 271, threonine 281, and 287–293 (WGSEERS).

It is found in the cytoplasm. The protein resides in the nucleus. The protein localises to the secreted. Its function is as follows. Binds galactosides. Has high affinity for the Forssman pentasaccharide. Ligand for HAVCR2/TIM3. Binding to HAVCR2 induces T-helper type 1 lymphocyte (Th1) death. Also stimulates bactericidal activity in infected macrophages by causing macrophage activation and IL1B secretion which restricts intracellular bacterial growth. Ligand for P4HB; the interaction retains P4HB at the cell surface of Th2 T helper cells, increasing disulfide reductase activity at the plasma membrane, altering the plasma membrane redox state and enhancing cell migration. Ligand for CD44; the interaction enhances binding of SMAD3 to the FOXP3 promoter, leading to up-regulation of FOXP3 expression and increased induced regulatory T (iTreg) cell stability and suppressive function. Promotes ability of mesenchymal stromal cells to suppress T-cell proliferation. Expands regulatory T-cells and induces cytotoxic T-cell apoptosis following virus infection. Activates ERK1/2 phosphorylation inducing cytokine (IL-6, IL-8, IL-12) and chemokine (CCL2) production in mast and dendritic cells. Inhibits degranulation and induces apoptosis of mast cells. Induces maturation and migration of dendritic cells. Inhibits natural killer (NK) cell function. Can transform NK cell phenotype from peripheral to decidual during pregnancy. Astrocyte derived galectin-9 enhances microglial TNF production. May play a role in thymocyte-epithelial interactions relevant to the biology of the thymus. May provide the molecular basis for urate flux across cell membranes, allowing urate that is formed during purine metabolism to efflux from cells and serving as an electrogenic transporter that plays an important role in renal and gastrointestinal urate excretion. Highly selective to the anion urate. This Bos taurus (Bovine) protein is Galectin-9 (LGALS9).